An 89-amino-acid chain; its full sequence is Protein FAM25A (89 aa).

Belongs to the FAM25 family.

The protein is Protein FAM25A of Homo sapiens (Human).